Reading from the N-terminus, the 234-residue chain is Large ribosomal subunit protein uL1 (234 aa).

Belongs to the universal ribosomal protein uL1 family. Part of the 50S ribosomal subunit.

In terms of biological role, binds directly to 23S rRNA. The L1 stalk is quite mobile in the ribosome, and is involved in E site tRNA release. Functionally, protein L1 is also a translational repressor protein, it controls the translation of the L11 operon by binding to its mRNA. The protein is Large ribosomal subunit protein uL1 of Psychromonas ingrahamii (strain DSM 17664 / CCUG 51855 / 37).